We begin with the raw amino-acid sequence, 194 residues long: RNA polymerase II subunit A C-terminal domain phosphatase SSU72 like protein 5 (194 aa).

It belongs to the SSU72 phosphatase family.

It is found in the nucleus. It catalyses the reaction O-phospho-L-seryl-[protein] + H2O = L-seryl-[protein] + phosphate. It carries out the reaction O-phospho-L-threonyl-[protein] + H2O = L-threonyl-[protein] + phosphate. Protein phosphatase that catalyzes the dephosphorylation of the C-terminal domain of RNA polymerase II. Plays a role in RNA processing and termination. This is RNA polymerase II subunit A C-terminal domain phosphatase SSU72 like protein 5 from Homo sapiens (Human).